Here is a 701-residue protein sequence, read N- to C-terminus: Potassium-transporting ATPase ATP-binding subunit (701 aa).

Positions 1-28 (MNPDAPTPKNKSSRSRPSDRPQARKKAK) are disordered. Helical transmembrane passes span 57–77 (MFLVWVGTIITLSVTIEPNLF), 90–110 (GILTGILFFTVWFANFAEAVA), 245–265 (VLLAVLSLVFLFVVATLPVFA), and 276–296 (ILVALLVALIPTTIGGLLSAI). Residue D329 is the 4-aspartylphosphate intermediate of the active site. ATP contacts are provided by residues D366, E370, 397–404 (FSAKTRMS), and K416. Mg(2+) is bound by residues D539 and D543. 3 helical membrane-spanning segments follow: residues 599-619 (FSLANDIAKYFAIIPVIFASA), 635-655 (AVLSALIYNALIIPALIPLAL), and 681-701 (VIAPFIAIKLIDVLITLVGLA).

It belongs to the cation transport ATPase (P-type) (TC 3.A.3) family. Type IA subfamily. As to quaternary structure, the system is composed of three essential subunits: KdpA, KdpB and KdpC.

The protein localises to the cell membrane. It catalyses the reaction K(+)(out) + ATP + H2O = K(+)(in) + ADP + phosphate + H(+). Part of the high-affinity ATP-driven potassium transport (or Kdp) system, which catalyzes the hydrolysis of ATP coupled with the electrogenic transport of potassium into the cytoplasm. This subunit is responsible for energy coupling to the transport system and for the release of the potassium ions to the cytoplasm. The sequence is that of Potassium-transporting ATPase ATP-binding subunit from Anabaena sp. (strain L31).